Here is a 480-residue protein sequence, read N- to C-terminus: Glutathione reductase (480 aa).

FAD is bound by residues S31 and G32. A glutathione-binding site is contributed by S31. R38 is a glutathione binding site. 4 residues coordinate FAD: E51, T58, C59, and K67. A disulfide bridge links C59 with C64. Glutathione is bound at residue Y121. Residue A137 participates in FAD binding. The NADP(+) site is built by I206, E209, R226, and G291. D331 contacts FAD. Residue E337 coordinates NADP(+). T339 provides a ligand contact to FAD. R347 contributes to the glutathione binding site. NADP(+) is bound at residue V372. K422 contributes to the glutathione binding site. Position 469 (H469) interacts with FAD. H469 functions as the Proton acceptor in the catalytic mechanism.

This sequence belongs to the class-I pyridine nucleotide-disulfide oxidoreductase family. Homodimer. The cofactor is FAD.

The protein localises to the cytoplasm. Its subcellular location is the mitochondrion. It carries out the reaction 2 glutathione + NADP(+) = glutathione disulfide + NADPH + H(+). In terms of biological role, catalyzes the reduction of glutathione disulfide (GSSG) to reduced glutathione (GSH). Constitutes the major mechanism to maintain a high GSH:GSSG ratio in the cytosol. This chain is Glutathione reductase (GLR1), found in Eremothecium gossypii (strain ATCC 10895 / CBS 109.51 / FGSC 9923 / NRRL Y-1056) (Yeast).